Consider the following 146-residue polypeptide: UPF0178 protein BCQ_2874 (146 aa).

The protein belongs to the UPF0178 family.

The sequence is that of UPF0178 protein BCQ_2874 from Bacillus cereus (strain Q1).